Reading from the N-terminus, the 650-residue chain is Growth hormone receptor (650 aa).

A signal peptide spans 1 to 24 (MDLCQVFLTLALAVTSSTFSGSEA). The Extracellular segment spans residues 25-273 (TPATLGKASP…ILEACEEDIQ (249 aa)). Intrachain disulfides connect cysteine 56–cysteine 66 and cysteine 109–cysteine 120. The N-linked (GlcNAc...) asparagine glycan is linked to asparagine 123. An intrachain disulfide couples cysteine 134 to cysteine 148. One can recognise a Fibronectin type-III domain in the interval 159–262 (PPIGLNWTLL…EVLRVIFPQT (104 aa)). 3 N-linked (GlcNAc...) asparagine glycosylation sites follow: asparagine 164, asparagine 169, and asparagine 208. Residues 248–252 (YSEFS) carry the WSXWS motif motif. The helical transmembrane segment at 274-297 (FPWFLIIIFGIFGVAVMLFVVIFS) threads the bilayer. Topologically, residues 298–650 (KQQRIKMLIL…STDQLNKIMQ (353 aa)) are cytoplasmic. A required for JAK2 binding region spans residues 303–390 (KMLILPPVPV…HEKSAGILGA (88 aa)). The Box 1 motif motif lies at 306 to 314 (ILPPVPVPK). The UbE motif signature appears at 349–358 (DSWVEFIELD). The residue at position 350 (serine 350) is a Phosphoserine. A disordered region spans residues 466–486 (KPQPLLSSETEATHQLASTPM). Polar residues predominate over residues 470-486 (LLSSETEATHQLASTPM). Residues tyrosine 498 and tyrosine 606 each carry the phosphotyrosine modification.

Belongs to the type I cytokine receptor family. Type 1 subfamily. In terms of assembly, on growth hormone (GH) binding, forms homodimers and binds JAK2 via a box 1-containing domain. In terms of processing, the soluble form (GHBP) is produced by phorbol ester-promoted proteolytic cleavage at the cell surface (shedding) by ADAM17/TACE. Shedding is inhibited by growth hormone (GH) binding to the receptor probably due to a conformational change in GHR rendering the receptor inaccessible to ADAM17. On GH binding, phosphorylated on tyrosine residues in the cytoplasmic domain by JAK2. Post-translationally, ubiquitinated by the ECS(SOCS2) complex following ligand-binding and phosphorylation by JAK2, leading to its degradation by the proteasome. Regulation by the ECS(SOCS2) complex acts as a negative feedback loop of growth hormone receptor signaling. Ubiquitination is not sufficient for GHR internalization. Expressed in all tissues tested including, liver, heart, adipose tissue, mammary gland, testes, ovary, brain, kidney and muscle. Highest levels in liver.

Its subcellular location is the cell membrane. The protein localises to the secreted. Functionally, receptor for pituitary gland growth hormone (GH1) involved in regulating postnatal body growth. On ligand binding, couples to the JAK2/STAT5 pathway. The soluble form (GHBP) acts as a reservoir of growth hormone in plasma and may be a modulator/inhibitor of GH signaling. This Mus musculus (Mouse) protein is Growth hormone receptor (Ghr).